The chain runs to 362 residues: Somatostatin receptor type 5 (362 aa).

Positions 1–10 (MEPLSLTSTP) are enriched in polar residues. The segment at 1–24 (MEPLSLTSTPSWNASAASSSSHNW) is disordered. Over 1 to 35 (MEPLSLTSTPSWNASAASSSSHNWSLVDPVSPMGA) the chain is Extracellular. Residues 11-24 (SWNASAASSSSHNW) show a composition bias toward low complexity. N-linked (GlcNAc...) asparagine glycosylation is found at asparagine 13 and asparagine 23. The helical transmembrane segment at 36 to 63 (RAVLVPVLYLLVCTVGLGGNTLVIYVVL) threads the bilayer. The Cytoplasmic segment spans residues 64 to 73 (RYAKMKTVTN). The chain crosses the membrane as a helical span at residues 74–99 (VYILNLAVADVLFMLGLPFLATQNAV). The Extracellular segment spans residues 100 to 110 (SYWPFGSFLCR). Cysteine 109 and cysteine 184 are disulfide-bonded. Residues 111–132 (LVMTLDGINQFTSIFCLMVMSV) traverse the membrane as a helical segment. Residues 133 to 154 (DRYLAVVHPLRSARWRRPRVAK) lie on the Cytoplasmic side of the membrane. The chain crosses the membrane as a helical span at residues 155 to 175 (LASAAVWVFSLLMSLPLLVFA). At 176–195 (DVQEGWGTCNLSWPEPVGLW) the chain is on the extracellular side. N-linked (GlcNAc...) asparagine glycosylation occurs at asparagine 185. Residues 196–220 (GAAFITYTSVLGFFGPLLVICLCYL) form a helical membrane-spanning segment. At 221–246 (LIVVKVKAAGMRVGSSRRRRSERKVT) the chain is on the cytoplasmic side. Residues 247 to 272 (RMVVVVVLVFVGCWLPFFIVNIVNLA) form a helical membrane-spanning segment. Residues 273 to 282 (FTLPEEPTSA) lie on the Extracellular side of the membrane. The helical transmembrane segment at 283–307 (GLYFFVVVLSYANSCANPLLYGFLS) threads the bilayer. At 308–362 (DNFRQSFRKALCLRRGYGVEDADAIEPRPDKSGRPQTTLPTRSCEANGLMQTSRL) the chain is on the cytoplasmic side. A lipid anchor (S-palmitoyl cysteine; by ZDHHC5) is attached at cysteine 319. The interval 330 to 362 (DAIEPRPDKSGRPQTTLPTRSCEANGLMQTSRL) is disordered.

Belongs to the G-protein coupled receptor 1 family. In terms of assembly, heterodimer with SSTR2. Heterodimerization with SSTR2 increases cell growth inhibition activity of SSTR2. Post-translationally, palmitoylated at Cys-319 by ZDHHC5, but not ZDHHC8. Palmitoylation creates an additional intracellular loop which is thought to be important for efficient coupling to G-proteins and may target the protein to lipid rafts. As to expression, expressed in adult brain but not in liver, heart, spleen, or kidney.

Its subcellular location is the cell membrane. Functionally, receptor for somatostatin-28. The activity of this receptor is mediated by G proteins which inhibit adenylyl cyclase. Increases cell growth inhibition activity of SSTR2 following heterodimerization. In Mus musculus (Mouse), this protein is Somatostatin receptor type 5 (Sstr5).